We begin with the raw amino-acid sequence, 524 residues long: Methylmalonyl-CoA carboxyltransferase 12S subunit (524 aa).

In terms of domain architecture, CoA carboxyltransferase N-terminal spans Met-13–Asn-268. Residues Met-13–Met-506 are carboxyltransferase. In terms of domain architecture, CoA carboxyltransferase C-terminal spans Ser-274–Met-506.

In terms of assembly, homohexamer. Transcarboxylase is composed of three subunits: 1.3S, 5S, and 12S. The core of the enzyme is composed of six 12S subunits. On each side of the core there are three pairs of 5S subunits. Each 5S dimer is attached to the core by two 1.3S subunits. Thus the total number of chains is 30 (6 + 12 + 12).

The catalysed reaction is (S)-methylmalonyl-CoA + pyruvate = propanoyl-CoA + oxaloacetate. Functionally, the 12S subunit specifically catalyzes the transfer of the carboxyl group of methylmalonyl CoA to the biotin of the 1.3S subunit forming propanoyl-CoA and carboxylated 1.3S-biotin. This is Methylmalonyl-CoA carboxyltransferase 12S subunit from Propionibacterium freudenreichii subsp. shermanii.